We begin with the raw amino-acid sequence, 309 residues long: Dihydroorotate dehydrogenase B (NAD(+)), catalytic subunit (309 aa).

FMN contacts are provided by residues Ser-21 and Lys-45–Ala-46. Substrate is bound by residues Lys-45 and Asn-69–Leu-73. 2 residues coordinate FMN: Asn-99 and Asn-127. Residue Asn-127 participates in substrate binding. Cys-130 serves as the catalytic Nucleophile. Positions 165 and 191 each coordinate FMN. Asn-192 to Thr-193 lines the substrate pocket. Residues Gly-217, Gly-243 to Gly-244, and Gly-265 to Thr-266 contribute to the FMN site.

It belongs to the dihydroorotate dehydrogenase family. Type 1 subfamily. In terms of assembly, heterotetramer of 2 PyrK and 2 PyrD type B subunits. The cofactor is FMN.

It localises to the cytoplasm. The catalysed reaction is (S)-dihydroorotate + NAD(+) = orotate + NADH + H(+). The protein operates within pyrimidine metabolism; UMP biosynthesis via de novo pathway; orotate from (S)-dihydroorotate (NAD(+) route): step 1/1. Catalyzes the conversion of dihydroorotate to orotate with NAD(+) as electron acceptor. The protein is Dihydroorotate dehydrogenase B (NAD(+)), catalytic subunit (pyrD) of Exiguobacterium sibiricum (strain DSM 17290 / CCUG 55495 / CIP 109462 / JCM 13490 / 255-15).